Consider the following 351-residue polypeptide: MVASNLTLQQRGWFDVLDDWLKRDRFVFVGWSGLLLFPTAYLAIGGWLTGTTFVTSWYTHGLASSYLEGANFLTAAVSTPADAMGHSLLLLWGPEAQGDFIRWCQLGGLWAFVALHGAFALIGFMLRQFELARLIGIRPYNAIAFSGPIAVFVSVFLIYPLGQSSWFFAPSFGVAAIFRFLLFLQGFHNWTLNPFHMMGVAGILGGALLSAIHGVTVENTLYQDGEQANTFKAFDSTQEEETYSMVTANRFWSQIFGIAFSNKRWLHFFMLFVPVMGLWTSSIGIIGLALNLRAYDFVSQEIRASEDPEFETFYTKNILLNEGLRAWLAPVDQPHENFVFPEEVLPRGNAL.

Residues 39–59 (TAYLAIGGWLTGTTFVTSWYT) traverse the membrane as a helical segment. Histidine 116 is a binding site for chlorophyll a. The chain crosses the membrane as a helical span at residues 123-139 (GFMLRQFELARLIGIRP). 2 residues coordinate pheophytin a: glutamine 128 and asparagine 141. A helical transmembrane segment spans residues 151-164 (VFVSVFLIYPLGQS). Histidine 196 serves as a coordination point for chlorophyll a. The chain crosses the membrane as a helical span at residues 206–226 (GALLSAIHGVTVENTLYQDGE). Histidine 213 and phenylalanine 260 together coordinate a plastoquinone. Histidine 213 lines the Fe cation pocket. Fe cation is bound at residue histidine 267. A helical transmembrane segment spans residues 277–293 (GLWTSSIGIIGLALNLR).

It belongs to the reaction center PufL/M/PsbA/D family. PSII is composed of 1 copy each of membrane proteins PsbA, PsbB, PsbC, PsbD, PsbE, PsbF, PsbH, PsbI, PsbJ, PsbK, PsbL, PsbM, PsbT, PsbX, PsbY, PsbZ, Psb30/Ycf12, peripheral proteins PsbO, CyanoQ (PsbQ), PsbU, PsbV and a large number of cofactors. It forms dimeric complexes. It depends on The D1/D2 heterodimer binds P680, chlorophylls that are the primary electron donor of PSII, and subsequent electron acceptors. It shares a non-heme iron and each subunit binds pheophytin, quinone, additional chlorophylls, carotenoids and lipids. There is also a Cl(-1) ion associated with D1 and D2, which is required for oxygen evolution. The PSII complex binds additional chlorophylls, carotenoids and specific lipids. as a cofactor.

The protein localises to the host cellular thylakoid membrane. It catalyses the reaction 2 a plastoquinone + 4 hnu + 2 H2O = 2 a plastoquinol + O2. Functionally, photosystem II (PSII) is a light-driven water:plastoquinone oxidoreductase that uses light energy to abstract electrons from H(2)O, generating O(2) and a proton gradient subsequently used for ATP formation. It consists of a core antenna complex that captures photons, and an electron transfer chain that converts photonic excitation into a charge separation. The D1/D2 (PsbA/PsbD) reaction center heterodimer binds P680, the primary electron donor of PSII as well as several subsequent electron acceptors. D2 is needed for assembly of a stable PSII complex. This chain is Photosystem II D2 protein (psbD), found in Synechococcus phage S-RSM2.